The sequence spans 224 residues: Large ribosomal subunit protein uL3 (224 aa).

Gln-158 is modified (N5-methylglutamine).

This sequence belongs to the universal ribosomal protein uL3 family. As to quaternary structure, part of the 50S ribosomal subunit. Forms a cluster with proteins L14 and L19. Post-translationally, methylated by PrmB.

One of the primary rRNA binding proteins, it binds directly near the 3'-end of the 23S rRNA, where it nucleates assembly of the 50S subunit. The protein is Large ribosomal subunit protein uL3 of Paracidovorax citrulli (strain AAC00-1) (Acidovorax citrulli).